Consider the following 494-residue polypeptide: MKGFLSLTLLPLLVAASPVAVNSIHNDAAPILSSMTSKDIPDSYIVVFKKHVDPSSASAHQSWLQEVHTAHTGRMELKKRSLFGFDFEAFMGLKHTFHIAGSLLGYAGHFHEDVIEQIRRHPDVDYIEKDSEVRTMSEGSVEKNAPWGLARISHRESLSFGNFNKYLYAEEGGEGVDAYVIDTGANVKHVDFEGRANWGKTIPQGDADEDGNGHGTHCSGTIAGKKFGVAKKANVYAVKVLRSNGSGTMSDVVKGVEWAAEAHIKKSKKGDKKFKGSVANMSLGGGSSRTLDLAVNAAVDAGIHFAVAAGNDNADACNYSPAAAEKAITVGASTLADERAYFSNYGKCTDIFAPGLNILSTWVGSDHATNTISGTSMASPHIAGLLAYYVSLAPAKDSAYAVADVTPKQLKAALISVATEGTLTDIPSDTPNLLAWNGGGSANYTKILADGGYKAHNAETTVEDRIGGIIDSAEKAFHKELGAIYSEIKDAVSA.

Positions 1–16 are cleaved as a signal peptide; that stretch reads MKGFLSLTLLPLLVAA. A propeptide spans 17-136 (removed in mature form); it reads SPVAVNSIHN…IEKDSEVRTM (120 aa). The region spanning 43-136 is the Inhibitor I9 domain; sequence SYIVVFKKHV…IEKDSEVRTM (94 aa). Residues 146–448 enclose the Peptidase S8 domain; the sequence is PWGLARISHR…GGSANYTKIL (303 aa). IgE-binding stretches follow at residues 180–198 and 209–231; these read VIDT…RANW and EDGN…GVAK. Active-site charge relay system residues include Asp182 and His214. N-linked (GlcNAc...) asparagine glycans are attached at residues Asn244 and Asn280. The Charge relay system role is filled by Ser376. Asn443 carries N-linked (GlcNAc...) asparagine glycosylation. Residues 454–494 constitute a propeptide, removed in mature form; that stretch reads KAHNAETTVEDRIGGIIDSAEKAFHKELGAIYSEIKDAVSA.

Belongs to the peptidase S8 family.

Its function is as follows. Serine protease. This is Subtilisin-like serine protease EN45_078720 from Penicillium chrysogenum (Penicillium notatum).